A 134-amino-acid polypeptide reads, in one-letter code: Small ribosomal subunit protein uS11 (134 aa).

The interval 1–22 is disordered; that stretch reads MAQKTRATAARKPRRKVNKNVT. The segment covering 9–18 has biased composition (basic residues); that stretch reads AARKPRRKVN.

It belongs to the universal ribosomal protein uS11 family. Part of the 30S ribosomal subunit. Interacts with proteins S7 and S18. Binds to IF-3.

Functionally, located on the platform of the 30S subunit, it bridges several disparate RNA helices of the 16S rRNA. Forms part of the Shine-Dalgarno cleft in the 70S ribosome. This chain is Small ribosomal subunit protein uS11, found in Kocuria rhizophila (strain ATCC 9341 / DSM 348 / NBRC 103217 / DC2201).